We begin with the raw amino-acid sequence, 110 residues long: UPF0102 protein HH_1751 (110 aa).

The protein belongs to the UPF0102 family.

The sequence is that of UPF0102 protein HH_1751 from Helicobacter hepaticus (strain ATCC 51449 / 3B1).